Reading from the N-terminus, the 230-residue chain is Transmembrane protein 225 (230 aa).

Residues methionine 1–serine 8 lie on the Cytoplasmic side of the membrane. The helical transmembrane segment at isoleucine 9–isoleucine 29 threads the bilayer. Over methionine 30–arginine 71 the chain is Extracellular. A helical membrane pass occupies residues methionine 72–isoleucine 92. The Cytoplasmic segment spans residues serine 93–histidine 99. The helical transmembrane segment at leucine 100–tyrosine 120 threads the bilayer. Residues histidine 121–tryptophan 139 lie on the Extracellular side of the membrane. A helical membrane pass occupies residues isoleucine 140–isoleucine 160. Over glutamine 161–leucine 230 the chain is Cytoplasmic. The RVxF motif lies at arginine 224–tryptophan 228.

Interacts (via RVxF motif) with PPP1CC. Expressed in testis, epididymis and spermatozoa (at protein level). Not expressed in brain, heart, lung, liver, spleen, kidney and skeletal muscle.

Its subcellular location is the cytoplasmic vesicle. The protein localises to the secretory vesicle. The protein resides in the acrosome membrane. Probably inhibits protein phosphatase 1 (PP1) in sperm via binding to catalytic subunit PPP1CC. In Mus musculus (Mouse), this protein is Transmembrane protein 225 (Tmem225).